Here is a 63-residue protein sequence, read N- to C-terminus: uncharacterized protein (63 aa).

The N-terminal stretch at 1–18 is a signal peptide; sequence MLNSEHFNLIQRALDATA.

This is an uncharacterized protein from Bacillus subtilis (strain 168).